A 371-amino-acid polypeptide reads, in one-letter code: Putative glutamate--cysteine ligase 2 (371 aa).

It belongs to the glutamate--cysteine ligase type 2 family. YbdK subfamily.

The enzyme catalyses L-cysteine + L-glutamate + ATP = gamma-L-glutamyl-L-cysteine + ADP + phosphate + H(+). In terms of biological role, ATP-dependent carboxylate-amine ligase which exhibits weak glutamate--cysteine ligase activity. The chain is Putative glutamate--cysteine ligase 2 from Burkholderia thailandensis (strain ATCC 700388 / DSM 13276 / CCUG 48851 / CIP 106301 / E264).